Here is a 100-residue protein sequence, read N- to C-terminus: uncharacterized protein (100 aa).

This is an uncharacterized protein from Rhizobium leguminosarum bv. phaseoli.